Reading from the N-terminus, the 21-residue chain is Putative NADH dehydrogenase subunit PS9 (21 aa).

This is Putative NADH dehydrogenase subunit PS9 from Pinus strobus (Eastern white pine).